We begin with the raw amino-acid sequence, 227 residues long: Ribosomal RNA small subunit methyltransferase G (227 aa).

S-adenosyl-L-methionine contacts are provided by residues Gly-74, Leu-79, Ala-124–Glu-125, and Arg-142.

This sequence belongs to the methyltransferase superfamily. RNA methyltransferase RsmG family.

It localises to the cytoplasm. Functionally, specifically methylates the N7 position of guanine in position 518 of 16S rRNA. This Mycolicibacterium gilvum (strain PYR-GCK) (Mycobacterium gilvum (strain PYR-GCK)) protein is Ribosomal RNA small subunit methyltransferase G.